A 219-amino-acid polypeptide reads, in one-letter code: Small ribosomal subunit protein uS3 (219 aa).

The 69-residue stretch at Ile-38–Lys-106 folds into the KH type-2 domain.

This sequence belongs to the universal ribosomal protein uS3 family. As to quaternary structure, part of the 30S ribosomal subunit. Forms a tight complex with proteins S10 and S14.

In terms of biological role, binds the lower part of the 30S subunit head. Binds mRNA in the 70S ribosome, positioning it for translation. The polypeptide is Small ribosomal subunit protein uS3 (Lachnoclostridium phytofermentans (strain ATCC 700394 / DSM 18823 / ISDg) (Clostridium phytofermentans)).